We begin with the raw amino-acid sequence, 386 residues long: Na(+)/H(+) antiporter NhaA (386 aa).

Helical transmembrane passes span 10–30 (MGSASGILLFFFALLAIIFAN), 58–78 (LLHWINDGFMAVFFVLVGLEV), 94–114 (IFPAVAAIGGMIVPALIYYLI), 124–144 (GWAIPMATDIAFALGIVALLG), 154–174 (FLLALAIIDDLGAIVVIAVFF), 176–196 (EELSIQALSVAIVAIAGLITL), 199–219 (MKVGHLCAYLIFGLILWAAVL), 253–273 (ILTPWCSFFVLPLFAFANAGV), 283–303 (IFSTLPLGIALGLIVGKPLGV), 327–347 (VFAIAILCGIGFTMSMFLAGL), and 361–381 (LSRLGILLGSSVSAILGYLLL).

The protein belongs to the NhaA Na(+)/H(+) (TC 2.A.33) antiporter family.

The protein localises to the cell inner membrane. The enzyme catalyses Na(+)(in) + 2 H(+)(out) = Na(+)(out) + 2 H(+)(in). Its function is as follows. Na(+)/H(+) antiporter that extrudes sodium in exchange for external protons. This Mannheimia succiniciproducens (strain KCTC 0769BP / MBEL55E) protein is Na(+)/H(+) antiporter NhaA.